Reading from the N-terminus, the 1893-residue chain is Endoribonuclease Dicer (1893 aa).

One can recognise a Helicase ATP-binding domain in the interval 41–217 (LLEAALDHNT…DLEEKIQKLE (177 aa)). 54-61 (LNSGSGKT) is an ATP binding site. Positions 165 to 168 (DECH) match the DECH box motif. Positions 400–424 (VSWSDSEDDDDEDEEIEEKEKTETS) are disordered. Residues 404 to 416 (DSEDDDDEDEEIE) are compositionally biased toward acidic residues. The 170-residue stretch at 424-593 (SFPSPFTNIL…SIDCGNTESE (170 aa)) folds into the Helicase C-terminal domain. Residues 621-713 (AIGHINRYCA…MPVGKETVKY (93 aa)) enclose the Dicer dsRNA-binding fold domain. The interval 718-737 (DLHDEEETSVPGRPGSTKRR) is disordered. The PAZ domain maps to 886–1036 (KFVEDIEKSE…LVPELCAIHP (151 aa)). 2 consecutive RNase III domains span residues 1249–1380 (TSDM…ETSG) and 1637–1795 (FENF…MDSG). Residues Glu1293, Asp1371, Glu1374, Glu1676, Asp1781, and Glu1784 each contribute to the Mg(2+) site. In terms of domain architecture, DRBM spans 1820–1885 (VPRSPVRELL…ARRALRSLKA (66 aa)).

Belongs to the helicase family. Dicer subfamily. As to quaternary structure, component of the RISC loading complex (RLC), or micro-RNA (miRNA) loading complex (miRLC), which is composed of dicer1, ago2 and tarbp2; dicer1 and tarbp2 are required to process precursor miRNAs (pre-miRNAs) to mature miRNAs and then load them onto ago2. Note that the trimeric RLC/miRLC is also referred to as RISC. Mg(2+) serves as cofactor. It depends on Mn(2+) as a cofactor.

The protein localises to the cytoplasm. The catalysed reaction is Endonucleolytic cleavage to 5'-phosphomonoester.. In terms of biological role, double-stranded RNA (dsRNA) endoribonuclease playing a central role in short dsRNA-mediated post-transcriptional gene silencing. Cleaves naturally occurring long dsRNAs and short hairpin pre-microRNAs (miRNA) into fragments of twenty-one to twenty-three nucleotides with 3' overhang of two nucleotides, producing respectively short interfering RNAs (siRNA) and mature microRNAs. SiRNAs and miRNAs serve as guide to direct the RNA-induced silencing complex (RISC) to complementary RNAs to degrade them or prevent their translation. Gene silencing mediated by siRNAs, also called RNA interference, controls the elimination of transcripts from mobile and repetitive DNA elements of the genome but also the degradation of exogenous RNA of viral origin for instance. The miRNA pathway on the other side is a mean to specifically regulate the expression of target genes. The sequence is that of Endoribonuclease Dicer (dicer1) from Xenopus tropicalis (Western clawed frog).